The following is a 130-amino-acid chain: Small ribosomal subunit protein uS11c (130 aa).

Belongs to the universal ribosomal protein uS11 family. Part of the 30S ribosomal subunit.

The protein localises to the plastid. The protein resides in the chloroplast. The polypeptide is Small ribosomal subunit protein uS11c (Anthoceros angustus (Hornwort)).